Reading from the N-terminus, the 448-residue chain is Adenylosuccinate synthetase (448 aa).

Residues 22-28 (GDEGKGK) and 50-52 (GHT) each bind GTP. Residue Asp23 is the Proton acceptor of the active site. 2 residues coordinate Mg(2+): Asp23 and Gly50. IMP is bound by residues 23-26 (DEGK), 48-51 (NAGH), Thr139, Arg153, Gln234, Thr249, and Arg321. The active-site Proton donor is His51. 317–323 (SVTGRPR) is a substrate binding site. GTP is bound by residues Arg323, 349 to 351 (KLD), and 431 to 433 (STG).

The protein belongs to the adenylosuccinate synthetase family. As to quaternary structure, homodimer. It depends on Mg(2+) as a cofactor.

It localises to the cytoplasm. It catalyses the reaction IMP + L-aspartate + GTP = N(6)-(1,2-dicarboxyethyl)-AMP + GDP + phosphate + 2 H(+). It functions in the pathway purine metabolism; AMP biosynthesis via de novo pathway; AMP from IMP: step 1/2. In terms of biological role, plays an important role in the de novo pathway of purine nucleotide biosynthesis. Catalyzes the first committed step in the biosynthesis of AMP from IMP. This is Adenylosuccinate synthetase from Burkholderia pseudomallei (strain 1106a).